A 153-amino-acid chain; its full sequence is Riboflavin synthase (153 aa).

It belongs to the DMRL synthase family.

It carries out the reaction 2 6,7-dimethyl-8-(1-D-ribityl)lumazine + H(+) = 5-amino-6-(D-ribitylamino)uracil + riboflavin. It participates in cofactor biosynthesis; riboflavin biosynthesis; riboflavin from 2-hydroxy-3-oxobutyl phosphate and 5-amino-6-(D-ribitylamino)uracil: step 2/2. In Archaeoglobus fulgidus (strain ATCC 49558 / DSM 4304 / JCM 9628 / NBRC 100126 / VC-16), this protein is Riboflavin synthase (ribC).